Reading from the N-terminus, the 510-residue chain is Pre-glycoprotein polyprotein GP complex (510 aa).

A lipid anchor (N-myristoyl glycine; by host) is attached at Gly2. Over 2-17 (GQFITLMQSIPEALNM) the chain is Extracellular. A helical membrane pass occupies residues 18-32 (AFNVALVIVSLLCVT). Residue Lys33 is a topological domain, cytoplasmic. The chain crosses the membrane as a helical span at residues 34 to 53 (GLINLWKCGIIQLLMFLALA). Extracellular loops occupy residues 54–58 (GRSCD) and 59–448 (GEYK…ALAD). Cys57 lines the Zn(2+) pocket. N-linked (GlcNAc...) asparagine; by host glycans are attached at residues Asn75, Asn90, Asn101, Asn112, Asn117, Asn122, Asn133, Asn182, Asn218, and Asn243. Intrachain disulfides connect Cys87-Cys250, Cys295-Cys308, Cys317-Cys326, and Cys380-Cys401. 4 N-linked (GlcNAc...) asparagine; by host glycosylation sites follow: Asn381, Asn389, Asn406, and Asn411. Residues 449-469 (LCFWSLVFFTTTVFFQLIGIP) form a helical membrane-spanning segment. Residues 470-510 (THRHLIGEGCPKPHRLTSNSLCSCGFYKIPKKPFRWVRKGK) lie on the Cytoplasmic side of the membrane. Positions 471, 473, 479, 483, 491, and 493 each coordinate Zn(2+).

This sequence belongs to the arenaviridae GPC protein family. Homotetramer; disulfide-linked. As to quaternary structure, homotetramer. GP2 homotetramers bind through ionic interactions with GP1 homotetramers to form the GP complex together with the stable signal peptide. The GP-C polyprotein interacts with the host protease MBTPS1/SKI-1 resulting in the polyprotein processing. In terms of processing, specific enzymatic cleavages in vivo yield mature proteins. GP-C polyprotein is cleaved in the endoplasmic reticulum by the host protease MBTPS1. Only cleaved glycoprotein is incorporated into virions. Post-translationally, the SSP remains stably associated with the GP complex following cleavage by signal peptidase and plays crucial roles in the trafficking of GP through the secretory pathway. Myristoylation is necessary for GP2-mediated fusion activity.

It is found in the virion membrane. Its subcellular location is the host endoplasmic reticulum membrane. The protein localises to the host Golgi apparatus membrane. The protein resides in the host cell membrane. In terms of biological role, class I viral fusion protein that directs fusion of viral and host endosomal membranes, leading to delivery of the nucleocapsid into the cytoplasm. Membrane fusion is mediated by irreversible conformational changes induced upon acidification in the endosome. Stable signal peptide (SSP): cleaved and functions as a signal peptide. In addition, it is also retained as the third component of the GP complex. The SSP is required for efficient glycoprotein expression, post-translational maturation cleavage of GP1 and GP2, glycoprotein transport to the cell surface plasma membrane, formation of infectious virus particles, and acid pH-dependent glycoprotein-mediated cell fusion. Its function is as follows. Interacts with the host receptor. This chain is Pre-glycoprotein polyprotein GP complex, found in Pirital mammarenavirus (isolate Rat/Venezuela/VAV-488/1995) (PIRV).